We begin with the raw amino-acid sequence, 529 residues long: tRNA-2-methylthio-N(6)-dimethylallyladenosine synthase (529 aa).

One can recognise an MTTase N-terminal domain in the interval 18–134; the sequence is RTYQVRTYGC…LPTLLERARH (117 aa). 6 residues coordinate [4Fe-4S] cluster: C27, C63, C97, C171, C175, and C178. A Radical SAM core domain is found at 157 to 404; the sequence is RESAYAGWVS…IELQERISLE (248 aa). The region spanning 407–486 is the TRAM domain; the sequence is QAQVGRTLEL…PHHLIADGAL (80 aa).

It belongs to the methylthiotransferase family. MiaB subfamily. In terms of assembly, monomer. It depends on [4Fe-4S] cluster as a cofactor.

The protein resides in the cytoplasm. The enzyme catalyses N(6)-dimethylallyladenosine(37) in tRNA + (sulfur carrier)-SH + AH2 + 2 S-adenosyl-L-methionine = 2-methylsulfanyl-N(6)-dimethylallyladenosine(37) in tRNA + (sulfur carrier)-H + 5'-deoxyadenosine + L-methionine + A + S-adenosyl-L-homocysteine + 2 H(+). Catalyzes the methylthiolation of N6-(dimethylallyl)adenosine (i(6)A), leading to the formation of 2-methylthio-N6-(dimethylallyl)adenosine (ms(2)i(6)A) at position 37 in tRNAs that read codons beginning with uridine. The protein is tRNA-2-methylthio-N(6)-dimethylallyladenosine synthase of Mycobacterium sp. (strain KMS).